We begin with the raw amino-acid sequence, 398 residues long: uncharacterized protein (398 aa).

A Radical SAM core domain is found at 21-253 (TNFGPTNLII…WQLTSTSEPE (233 aa)). [4Fe-4S] cluster is bound by residues Cys-37, Cys-41, and Cys-44.

It belongs to the radical SAM superfamily. Anaerobic sulfatase-maturating enzyme family. Requires [4Fe-4S] cluster as cofactor.

This is an uncharacterized protein from Synechocystis sp. (strain ATCC 27184 / PCC 6803 / Kazusa).